A 710-amino-acid polypeptide reads, in one-letter code: Iron-sulfur clusters transporter ATM1, mitochondrial (710 aa).

Residues 1 to 38 (MWLSLPRSGYGSVATLTSKRVLACLTPLRQFSTSPAVS) constitute a mitochondrion transit peptide. Polar residues predominate over residues 35-52 (PAVSNANHKNVDNINKSP). The interval 35-83 (PAVSNANHKNVDNINKSPANDAANNAVEKGDKPTTSPEKLATKAEKSSA) is disordered. Residues 39–129 (NANHKNVDNI…PKGKTSVKFR (91 aa)) are Mitochondrial matrix-facing. The chain crosses the membrane as a helical span at residues 130–151 (VLVAVALLVGAKLLNVQVPFFF). The region spanning 130-419 (VLVAVALLVG…LGSVYRDLRQ (290 aa)) is the ABC transmembrane type-1 domain. Residues 152–173 (KEIIDDMNIEWNSATALGVGIT) are Mitochondrial intermembrane-facing. Residues 174 to 197 (ALIFSYGAARFGAVLFGELRNAIF) form a helical membrane-spanning segment. Topologically, residues 198–246 (ASVAQKAIKEVATNVFRHLLKLDMAFHLSRQTGGITRAIDRGTKGISFV) are mitochondrial matrix. A helical membrane pass occupies residues 247–270 (LSSMVFHIIPIALEISLVCGILSY). Asn271 is a topological domain (mitochondrial intermembrane). The helical transmembrane segment at 272–292 (FGWKYALVTGATMVSYAIFTI) threads the bilayer. Over 293–358 (TTTSWRTKFR…ASIKIATSLA (66 aa)) the chain is Mitochondrial matrix. Glutathione contacts are provided by residues 298–302 (RTKFR) and 361–364 (NSGQ). The helical transmembrane segment at 359 to 377 (FLNSGQNLIFSSALTAMMY) threads the bilayer. Residues 378-392 (MTCCGVADGSLTVGD) lie on the Mitochondrial intermembrane side of the membrane. A helical membrane pass occupies residues 393-414 (LVLVNQLVFQLSVPLNFLGSVY). Gly411 lines the glutathione pocket. Residues 415–710 (RDLRQSLLDM…AEEKAAKKDV (296 aa)) are Mitochondrial matrix-facing. The ABC transporter domain maps to 453-687 (IRFENVTYGY…DGLYKSMWDA (235 aa)). ATP is bound by residues Tyr462 and 486–497 (GPSGSGKSTILK).

The protein belongs to the ABC transporter superfamily. ABCB family. Heavy Metal importer (TC 3.A.1.210) subfamily. In terms of assembly, homodimer.

It is found in the mitochondrion inner membrane. Functionally, performs an essential function in the generation of cytoplasmic iron-sulfur proteins by mediating the ATP-dependent export of Fe/S cluster precursors synthesized by NFS1 and other mitochondrial proteins. Hydrolyzes ATP. Binds glutathione and may function by transporting a glutathione-conjugated iron-sulfur compound. The protein is Iron-sulfur clusters transporter ATM1, mitochondrial of Yarrowia lipolytica (strain CLIB 122 / E 150) (Yeast).